We begin with the raw amino-acid sequence, 382 residues long: Histidinol-phosphate aminotransferase (382 aa).

The residue at position 215 (Lys215) is an N6-(pyridoxal phosphate)lysine. Positions 363-382 are disordered; that stretch reads NIDNQSKTHSQTSSIRKGTI.

It belongs to the class-II pyridoxal-phosphate-dependent aminotransferase family. Histidinol-phosphate aminotransferase subfamily. As to quaternary structure, homodimer. The cofactor is pyridoxal 5'-phosphate.

The catalysed reaction is L-histidinol phosphate + 2-oxoglutarate = 3-(imidazol-4-yl)-2-oxopropyl phosphate + L-glutamate. It functions in the pathway amino-acid biosynthesis; L-histidine biosynthesis; L-histidine from 5-phospho-alpha-D-ribose 1-diphosphate: step 7/9. The polypeptide is Histidinol-phosphate aminotransferase (Yersinia pseudotuberculosis serotype O:1b (strain IP 31758)).